Reading from the N-terminus, the 2217-residue chain is Protein irg-7 (2217 aa).

A signal peptide spans 1–16 (MRNWVLIAALAVICLA). 2 EGF-like domains span residues 370–405 (SGST…FHCQ) and 864–896 (TGTY…ESCE). Intrachain disulfides connect Cys-379-Cys-393, Cys-395-Cys-404, Cys-868-Cys-873, Cys-886-Cys-895, Cys-1212-Cys-1312, Cys-1285-Cys-1304, Cys-1508-Cys-1521, and Cys-1523-Cys-1532. Positions 1188–1313 (IGQYCIKFMA…CAEPRAFACQ (126 aa)) constitute a C-type lectin domain. The EGF-like 3 domain maps to 1499–1533 (TGSRCTVPICVNGGTRNPDEATCSCPDGYEGPNCQ). One can recognise a VWFA domain in the interval 2016-2202 (DVVFMIDGSQ…NNQIKTIQQL (187 aa)).

The protein localises to the secreted. Functionally, plays a role in innate immunity, probably via the atf-7 pathway, to confer resistance to pathogenic bacteria. May also play a role in the regulation of longevity. This chain is Protein irg-7, found in Caenorhabditis elegans.